Consider the following 89-residue polypeptide: Small ribosomal subunit protein bS20 (89 aa).

Positions 1-27 (MANIKSAKKDSIISEERRKKNASQRSK) are disordered. The segment covering 7 to 18 (AKKDSIISEERR) has biased composition (basic and acidic residues).

The protein belongs to the bacterial ribosomal protein bS20 family.

Its function is as follows. Binds directly to 16S ribosomal RNA. This chain is Small ribosomal subunit protein bS20, found in Buchnera aphidicola subsp. Schizaphis graminum (strain Sg).